The primary structure comprises 333 residues: Homeobox protein SIX3 (333 aa).

The span at 57–71 shows a compositional bias: gly residues; sequence GGAGGAGGGSGGGGS. Disordered regions lie at residues 57 to 76, 233 to 252, and 259 to 333; these read GGAG…APPE, NPSK…TQVG, and RQRD…ECDV. An interaction with TLE5 region spans residues 73–120; sequence APPEELSMFQLPTLNFSPEQVASVCETLEETGDIERLGRFLWSLPVAP. The homeobox DNA-binding region spans 207-266; sequence GEQKTHCFKERTRSLLREWYLQDPYPNPSKKRELAQATGLTPTQVGNWFKNRRQRDRAAA. A bind to RHO promoter region spans residues 233–235; sequence NPS. Residues 294 to 310 show a composition bias toward low complexity; that stretch reads SAESPSTAASPTTSVSS. Over residues 317–333 the composition is skewed to polar residues; it reads TGTSILSVTSSDSECDV.

The protein belongs to the SIX/Sine oculis homeobox family. Interacts with EYA4; translocates EYA4 from the cytoplasm to the nucleus and promotes activation of their target genes. Interacts with MTA1 and HDAC2; represses its own transcription. Interacts with MTA1; facilitates the binding of SIX3 to the core DNA motif of SIX3 promoter. Interacts with EYA1; promotes EYA1 translocation to the nucleus. Interacts with TLE1 and TLE5 (via Q domain); can act in combination with either TLE1 and/or TLE5 leading to transcriptional repression or activation, respectively. Interacts (via homeobox) with NR4A3; differentially regulates the transcriptional activities NR4A3. Interacts with GMNN. Interacts with TLE4. In terms of tissue distribution, expressed in ependymal cells during the formation of the lateral wall.

It localises to the nucleus. Its function is as follows. Transcriptional regulator which can act as both a transcriptional repressor and activator by binding a ATTA homeodomain core recognition sequence on these target genes. During forebrain development represses WNT1 expression allowing zona limitans intrathalamica formation and thereby ensuring proper anterio-posterior patterning of the diencephalon and formation of the rostral diencephalon. Acts as a direct upstream activator of SHH expression in the rostral diencephalon ventral midline and that in turn SHH maintains its expression. In addition, Six3 activity is required for the formation of the telencephalon. During postnatal stages of brain development is necessary for ependymal cell maturation by promoting the maturation of radial glia into ependymal cells through regulation of neuroblast proliferation and migration. Acts on the proliferation and differentiation of neural progenitor cells through activating transcription of CCND1 AND CCND2. During early lens formation plays a role in lens induction and specification by activating directly PAX6 in the presumptive lens ectoderm. In turn PAX6 activates SIX3 resulting in activation of PDGFRA and CCND1 promoting cell proliferation. Also is required for the neuroretina development by directly suppressing WNT8B expression in the anterior neural plate territory. Its action during retina development and lens morphogenesis is TLE5 and TLE4-dependent manner. Furthermore, during eye development regulates several genes expression. Before and during early lens development represses the CRYGF promoter by binding a SIX repressor element. Directly activates RHO transcription, or cooperates with CRX or NRL. Six3 also functions in the formation of the proximodistal axis of the optic cup, and promotes the formation of optic vesicles-like structures. During pituitary development, acts in parallel or alternatively with HESX1 to control cell proliferation through Wnt/beta-catenin pathway. Plays a role in eye development by suppressing WNT1 expression and in dorsal-ventral patterning by repressing BMP signaling pathway. The polypeptide is Homeobox protein SIX3 (Six3) (Mus musculus (Mouse)).